The sequence spans 484 residues: tRNA sulfurtransferase (484 aa).

The region spanning 63–167 (REMIERLCCT…DQRLFVVHRQ (105 aa)) is the THUMP domain. Residues 185 to 186 (LM), Lys267, Gly289, and Gln298 contribute to the ATP site. A disulfide bond links Cys346 and Cys457. Positions 405-483 (ALAGQIVLDI…GHANVRVYRP (79 aa)) constitute a Rhodanese domain. Cys457 serves as the catalytic Cysteine persulfide intermediate.

It belongs to the ThiI family.

The protein resides in the cytoplasm. It carries out the reaction [ThiI sulfur-carrier protein]-S-sulfanyl-L-cysteine + a uridine in tRNA + 2 reduced [2Fe-2S]-[ferredoxin] + ATP + H(+) = [ThiI sulfur-carrier protein]-L-cysteine + a 4-thiouridine in tRNA + 2 oxidized [2Fe-2S]-[ferredoxin] + AMP + diphosphate. The catalysed reaction is [ThiS sulfur-carrier protein]-C-terminal Gly-Gly-AMP + S-sulfanyl-L-cysteinyl-[cysteine desulfurase] + AH2 = [ThiS sulfur-carrier protein]-C-terminal-Gly-aminoethanethioate + L-cysteinyl-[cysteine desulfurase] + A + AMP + 2 H(+). It functions in the pathway cofactor biosynthesis; thiamine diphosphate biosynthesis. In terms of biological role, catalyzes the ATP-dependent transfer of a sulfur to tRNA to produce 4-thiouridine in position 8 of tRNAs, which functions as a near-UV photosensor. Also catalyzes the transfer of sulfur to the sulfur carrier protein ThiS, forming ThiS-thiocarboxylate. This is a step in the synthesis of thiazole, in the thiamine biosynthesis pathway. The sulfur is donated as persulfide by IscS. This chain is tRNA sulfurtransferase, found in Azotobacter vinelandii (strain DJ / ATCC BAA-1303).